Reading from the N-terminus, the 522-residue chain is O-fucosyltransferase 38 (522 aa).

The helical; Signal-anchor for type II membrane protein transmembrane segment at 26–46 (AISLYLIFVFAFTIWVLVFSS) threads the bilayer. Over residues 54-67 (DHTKHQQQHHRDLI) the composition is skewed to basic and acidic residues. The interval 54–73 (DHTKHQQQHHRDLIDSESFP) is disordered. N147 carries an N-linked (GlcNAc...) asparagine glycan. Substrate is bound at residue 284-286 (HLR). An N-linked (GlcNAc...) asparagine glycan is attached at N325. Positions 475 to 496 (HKDRQGAPRRRKGPTQGIKGRA) are disordered.

This sequence belongs to the glycosyltransferase GT106 family.

It is found in the membrane. The protein operates within glycan metabolism. In Arabidopsis thaliana (Mouse-ear cress), this protein is O-fucosyltransferase 38.